The sequence spans 102 residues: uncharacterized protein (102 aa).

A run of 2 helical transmembrane segments spans residues 24 to 44 (AFIV…PVLT) and 55 to 75 (IGAV…TWIL).

It localises to the cell membrane. This is an uncharacterized protein from Bacillus subtilis (strain 168).